We begin with the raw amino-acid sequence, 236 residues long: MGQKIHPFGFRLSVQKNWSSRWYANSNNFPAMLSSDIKVREFLKKKLAHAAVSKIVIERPAKNAKITIYSARPGIVIGKKGEDIESLRSGLQGLMGVPVHLNIEEVRKPEIDATLIAESIAQQLEKRVMFRRAMKRAMQNAMRLGAQGIKIMSSGRLNGIEIARTEWYREGRVPLHTLRADIDYGVAEAKTTYGIIGIKVWVFKGEVFGNKIEQAAQPAEPEKKVRKSGAKNAATS.

Positions 39–107 (VREFLKKKLA…PVHLNIEEVR (69 aa)) constitute a KH type-2 domain. Positions 215-236 (AAQPAEPEKKVRKSGAKNAATS) are disordered.

It belongs to the universal ribosomal protein uS3 family. As to quaternary structure, part of the 30S ribosomal subunit. Forms a tight complex with proteins S10 and S14.

Binds the lower part of the 30S subunit head. Binds mRNA in the 70S ribosome, positioning it for translation. The sequence is that of Small ribosomal subunit protein uS3 from Methylobacillus flagellatus (strain ATCC 51484 / DSM 6875 / VKM B-1610 / KT).